The following is a 364-amino-acid chain: Peptide chain release factor 2 (364 aa).

Gln-251 bears the N5-methylglutamine mark.

It belongs to the prokaryotic/mitochondrial release factor family. In terms of processing, methylated by PrmC. Methylation increases the termination efficiency of RF2.

It is found in the cytoplasm. Peptide chain release factor 2 directs the termination of translation in response to the peptide chain termination codons UGA and UAA. The protein is Peptide chain release factor 2 of Campylobacter hominis (strain ATCC BAA-381 / DSM 21671 / CCUG 45161 / LMG 19568 / NCTC 13146 / CH001A).